We begin with the raw amino-acid sequence, 258 residues long: GTP cyclohydrolase FolE2 (258 aa).

The protein belongs to the GTP cyclohydrolase IV family.

The catalysed reaction is GTP + H2O = 7,8-dihydroneopterin 3'-triphosphate + formate + H(+). The protein operates within cofactor biosynthesis; 7,8-dihydroneopterin triphosphate biosynthesis; 7,8-dihydroneopterin triphosphate from GTP: step 1/1. In terms of biological role, converts GTP to 7,8-dihydroneopterin triphosphate. The sequence is that of GTP cyclohydrolase FolE2 from Geobacter sulfurreducens (strain ATCC 51573 / DSM 12127 / PCA).